Reading from the N-terminus, the 297-residue chain is Acetylglutamate kinase (297 aa).

Substrate-binding positions include 64–65 (GG), arginine 86, and asparagine 190.

It belongs to the acetylglutamate kinase family. ArgB subfamily.

It is found in the cytoplasm. The enzyme catalyses N-acetyl-L-glutamate + ATP = N-acetyl-L-glutamyl 5-phosphate + ADP. Its pathway is amino-acid biosynthesis; L-arginine biosynthesis; N(2)-acetyl-L-ornithine from L-glutamate: step 2/4. Its function is as follows. Catalyzes the ATP-dependent phosphorylation of N-acetyl-L-glutamate. The protein is Acetylglutamate kinase of Solidesulfovibrio magneticus (strain ATCC 700980 / DSM 13731 / RS-1) (Desulfovibrio magneticus).